Reading from the N-terminus, the 420-residue chain is Dynein axonemal assembly factor 4 (420 aa).

In terms of domain architecture, CS spans 3–87 (LQVSDYSWQQ…KEAAMWETLS (85 aa)). The tract at residues 7–103 (DYSWQQTKTA…EMMQRIREKS (97 aa)) is mediates interaction with ESR1 and STUB1. TPR repeat units lie at residues 290-323 (PEWL…NNKM), 324-357 (PLLY…LMPP), and 366-399 (MKAH…DPSN).

In terms of assembly, interacts with ZMYND10. Interacts with STUB1. Interacts with ESR1 and ESR2. Interacts with DNAAF2. Interacts with CCT3, CCT4, CCT5 and CCT8. Interacts with DNAAF6/PIH1D3.

It localises to the nucleus. The protein resides in the cytoplasm. It is found in the cell projection. The protein localises to the neuron projection. Its subcellular location is the dynein axonemal particle. In terms of biological role, involved in neuronal migration during development of the cerebral neocortex. May regulate the stability and proteasomal degradation of the estrogen receptors that play an important role in neuronal differentiation, survival and plasticity. Axonemal dynein assembly factor required for ciliary motility. The polypeptide is Dynein axonemal assembly factor 4 (Pan troglodytes (Chimpanzee)).